The following is a 350-amino-acid chain: tRNA uridine(34) hydroxylase (350 aa).

The region spanning 146 to 240 (DDPDALFIDM…YARKAREQGL (95 aa)) is the Rhodanese domain. Cys-200 (cysteine persulfide intermediate) is an active-site residue.

It belongs to the TrhO family.

The catalysed reaction is uridine(34) in tRNA + AH2 + O2 = 5-hydroxyuridine(34) in tRNA + A + H2O. Its function is as follows. Catalyzes oxygen-dependent 5-hydroxyuridine (ho5U) modification at position 34 in tRNAs, the first step in 5-carboxymethoxyuridine (cmo5U) biosynthesis. May be part of an alternate pathway, which is able to bypass cmo5U biogenesis in a subset of tRNAs under aerobic conditions. This Escherichia coli O81 (strain ED1a) protein is tRNA uridine(34) hydroxylase.